A 482-amino-acid chain; its full sequence is UDP-N-acetylmuramoyl-L-alanyl-D-glutamate--2,6-diaminopimelate ligase (482 aa).

Serine 29 contacts UDP-N-acetyl-alpha-D-muramoyl-L-alanyl-D-glutamate. 109–115 (GTNGKTS) contributes to the ATP binding site. UDP-N-acetyl-alpha-D-muramoyl-L-alanyl-D-glutamate-binding positions include 151 to 152 (TT), serine 178, and arginine 186. Residue lysine 218 is modified to N6-carboxylysine. Meso-2,6-diaminopimelate-binding positions include arginine 375, 399-402 (DNPR), glycine 451, and glutamate 455. The Meso-diaminopimelate recognition motif motif lies at 399–402 (DNPR).

This sequence belongs to the MurCDEF family. MurE subfamily. Requires Mg(2+) as cofactor. Post-translationally, carboxylation is probably crucial for Mg(2+) binding and, consequently, for the gamma-phosphate positioning of ATP.

Its subcellular location is the cytoplasm. The catalysed reaction is UDP-N-acetyl-alpha-D-muramoyl-L-alanyl-D-glutamate + meso-2,6-diaminopimelate + ATP = UDP-N-acetyl-alpha-D-muramoyl-L-alanyl-gamma-D-glutamyl-meso-2,6-diaminopimelate + ADP + phosphate + H(+). It participates in cell wall biogenesis; peptidoglycan biosynthesis. Functionally, catalyzes the addition of meso-diaminopimelic acid to the nucleotide precursor UDP-N-acetylmuramoyl-L-alanyl-D-glutamate (UMAG) in the biosynthesis of bacterial cell-wall peptidoglycan. In Caldanaerobacter subterraneus subsp. tengcongensis (strain DSM 15242 / JCM 11007 / NBRC 100824 / MB4) (Thermoanaerobacter tengcongensis), this protein is UDP-N-acetylmuramoyl-L-alanyl-D-glutamate--2,6-diaminopimelate ligase.